A 222-amino-acid chain; its full sequence is Small ribosomal subunit protein uS3 (222 aa).

Residues 39–107 (VREFLHKKLA…PVQINIEEVR (69 aa)) form the KH type-2 domain.

The protein belongs to the universal ribosomal protein uS3 family. As to quaternary structure, part of the 30S ribosomal subunit. Forms a tight complex with proteins S10 and S14.

Its function is as follows. Binds the lower part of the 30S subunit head. Binds mRNA in the 70S ribosome, positioning it for translation. This chain is Small ribosomal subunit protein uS3, found in Francisella tularensis subsp. tularensis (strain FSC 198).